We begin with the raw amino-acid sequence, 475 residues long: Sensor histidine kinase GlrK (475 aa).

The Cytoplasmic segment spans residues 1–13 (MKRWPVFPRSLRQ). A helical transmembrane segment spans residues 14–34 (LVMLAFLLILLPLLVLAWQAW). The Periplasmic segment spans residues 35–173 (QSLNALSDQA…LQREIAERGQ (139 aa)). Residues 174–194 (YFGWQSLVLFLVSLVMVLLFT) traverse the membrane as a helical segment. Residues 195 to 475 (RMIIGPVKNI…IELPSSKNTK (281 aa)) lie on the Cytoplasmic side of the membrane. Residues 256-472 (HLSHELKTPL…CFRIELPSSK (217 aa)) enclose the Histidine kinase domain. Position 259 is a phosphohistidine; by autocatalysis (H259).

Autophosphorylated.

It is found in the cell inner membrane. The catalysed reaction is ATP + protein L-histidine = ADP + protein N-phospho-L-histidine.. Member of the two-component regulatory system GlrR/GlrK that up-regulates transcription of the glmY sRNA when cells enter the stationary growth phase. Activates GlrR by phosphorylation. The polypeptide is Sensor histidine kinase GlrK (glrK) (Escherichia coli (strain K12)).